The chain runs to 918 residues: Chitin synthase C (918 aa).

The segment at 1 to 63 is disordered; the sequence is MSYNRLGDPY…EMPSSDRLAE (63 aa). The segment covering 22–37 has biased composition (low complexity); that stretch reads NPSSLSNRSPSPGRPL. 4 helical membrane-spanning segments follow: residues 562–581, 605–625, 637–657, and 672–692; these read WLNG…YQLW, LFAW…TTYL, VLGV…FVLS, and MVYL…FVTV. N-linked (GlcNAc...) asparagine glycosylation is present at N712. The next 3 membrane-spanning stretches (helical) occupy residues 715–735, 845–865, and 890–910; these read FFSI…ASII, VVLV…SSAG, and VVLW…MWFL.

Belongs to the chitin synthase family. Class I subfamily. Mainly expressed in hyphae and conidiphores. Relatively strongly expressed in young cleistothecia and in mature ascospores, but negligible in Huelle cells.

The protein resides in the cell membrane. Its subcellular location is the cell septum. The protein localises to the cell tip. It catalyses the reaction [(1-&gt;4)-N-acetyl-beta-D-glucosaminyl](n) + UDP-N-acetyl-alpha-D-glucosamine = [(1-&gt;4)-N-acetyl-beta-D-glucosaminyl](n+1) + UDP + H(+). In terms of biological role, polymerizes chitin, a structural polymer of the cell wall and septum, by transferring the sugar moiety of UDP-GlcNAc to the non-reducing end of the growing chitin polymer. ChsC and chsA share critical functions in hyphal wall integrity and differentiation. ChsA and chsC share also overlapping roles in septum formation. This is Chitin synthase C from Emericella nidulans (strain FGSC A4 / ATCC 38163 / CBS 112.46 / NRRL 194 / M139) (Aspergillus nidulans).